The sequence spans 203 residues: Holliday junction branch migration complex subunit RuvA (203 aa).

Positions 1 to 64 are domain I; the sequence is MIGRLRGIII…EDAQLLYGFN (64 aa). The interval 65–142 is domain II; it reads NKQERTLFKE…KGLHGDLFTP (78 aa). A flexible linker region spans residues 143–154; it reads AADLVLTSPASP. Residues 155–203 form a domain III region; sequence ATNDAEQEAVAALVALGYKPQEASRMVSKIARPDASSETLIREALRAAL.

It belongs to the RuvA family. Homotetramer. Forms an RuvA(8)-RuvB(12)-Holliday junction (HJ) complex. HJ DNA is sandwiched between 2 RuvA tetramers; dsDNA enters through RuvA and exits via RuvB. An RuvB hexamer assembles on each DNA strand where it exits the tetramer. Each RuvB hexamer is contacted by two RuvA subunits (via domain III) on 2 adjacent RuvB subunits; this complex drives branch migration. In the full resolvosome a probable DNA-RuvA(4)-RuvB(12)-RuvC(2) complex forms which resolves the HJ.

Its subcellular location is the cytoplasm. Functionally, the RuvA-RuvB-RuvC complex processes Holliday junction (HJ) DNA during genetic recombination and DNA repair, while the RuvA-RuvB complex plays an important role in the rescue of blocked DNA replication forks via replication fork reversal (RFR). RuvA specifically binds to HJ cruciform DNA, conferring on it an open structure. The RuvB hexamer acts as an ATP-dependent pump, pulling dsDNA into and through the RuvAB complex. HJ branch migration allows RuvC to scan DNA until it finds its consensus sequence, where it cleaves and resolves the cruciform DNA. This chain is Holliday junction branch migration complex subunit RuvA, found in Escherichia coli O9:H4 (strain HS).